Here is a 350-residue protein sequence, read N- to C-terminus: Anthranilate phosphoribosyltransferase (350 aa).

5-phospho-alpha-D-ribose 1-diphosphate is bound by residues Gly-81, 84–85 (GD), Thr-89, 91–94 (NIST), 109–117 (KHGGRSVSS), and Ser-121. An anthranilate-binding site is contributed by Gly-81. A Mg(2+)-binding site is contributed by Ser-93. An anthranilate-binding site is contributed by Arg-167. Residues Asp-230 and Glu-231 each coordinate Mg(2+).

The protein belongs to the anthranilate phosphoribosyltransferase family. As to quaternary structure, homodimer. Mg(2+) serves as cofactor.

The catalysed reaction is N-(5-phospho-beta-D-ribosyl)anthranilate + diphosphate = 5-phospho-alpha-D-ribose 1-diphosphate + anthranilate. It participates in amino-acid biosynthesis; L-tryptophan biosynthesis; L-tryptophan from chorismate: step 2/5. In terms of biological role, catalyzes the transfer of the phosphoribosyl group of 5-phosphorylribose-1-pyrophosphate (PRPP) to anthranilate to yield N-(5'-phosphoribosyl)-anthranilate (PRA). In Nitrosospira multiformis (strain ATCC 25196 / NCIMB 11849 / C 71), this protein is Anthranilate phosphoribosyltransferase.